A 276-amino-acid polypeptide reads, in one-letter code: Large ribosomal subunit protein uL2 (276 aa).

Disordered regions lie at residues 29 to 55 (PEKSLTTYKHSRQGRNNRGVITSRHRG) and 219 to 276 (HVRG…RRTR). Positions 259 to 276 (TRNKKKQSSKLIVRRRTR) are enriched in basic residues.

The protein belongs to the universal ribosomal protein uL2 family. As to quaternary structure, part of the 50S ribosomal subunit. Forms a bridge to the 30S subunit in the 70S ribosome.

One of the primary rRNA binding proteins. Required for association of the 30S and 50S subunits to form the 70S ribosome, for tRNA binding and peptide bond formation. It has been suggested to have peptidyltransferase activity; this is somewhat controversial. Makes several contacts with the 16S rRNA in the 70S ribosome. The polypeptide is Large ribosomal subunit protein uL2 (Rippkaea orientalis (strain PCC 8801 / RF-1) (Cyanothece sp. (strain PCC 8801))).